The sequence spans 613 residues: Serine/threonine-protein kinase pkpA (613 aa).

One can recognise a Protein kinase domain in the interval 17-269 (SKLNTVLGKG…AQEILEHRFL (253 aa)). Residues 23 to 31 (LGKGAYKVV) and Lys-50 contribute to the ATP site. The Proton acceptor role is filled by Asp-140. Disordered regions lie at residues 424 to 475 (LQPQ…STML) and 589 to 613 (VTQR…QELM). The segment covering 427-441 (QPQPQPQPQPQPQPQ) has biased composition (pro residues). Over residues 442–475 (PQFQLQPQLQYLSPQSTTSPGPTSDDNSTNSTML) the composition is skewed to low complexity. A compositionally biased stretch (polar residues) spans 592–602 (RGLQGTRSGAS).

It belongs to the protein kinase superfamily. Ser/Thr protein kinase family.

The catalysed reaction is L-seryl-[protein] + ATP = O-phospho-L-seryl-[protein] + ADP + H(+). The enzyme catalyses L-threonyl-[protein] + ATP = O-phospho-L-threonyl-[protein] + ADP + H(+). Its function is as follows. Serine/threonine protein kinase that probably participates as an intermediate in an intracellular system controlling nuclear proliferation. This Phycomyces blakesleeanus (strain ATCC 8743b / DSM 1359 / FGSC 10004 / NBRC 33097 / NRRL 1555) protein is Serine/threonine-protein kinase pkpA (pkpA).